The chain runs to 219 residues: Thiamine-phosphate synthase (219 aa).

4-amino-2-methyl-5-(diphosphooxymethyl)pyrimidine-binding positions include 44-48 and asparagine 79; that span reads QFREK. Residues aspartate 80 and aspartate 99 each contribute to the Mg(2+) site. Serine 117 provides a ligand contact to 4-amino-2-methyl-5-(diphosphooxymethyl)pyrimidine. 143-145 is a 2-[(2R,5Z)-2-carboxy-4-methylthiazol-5(2H)-ylidene]ethyl phosphate binding site; sequence TST. Lysine 146 contacts 4-amino-2-methyl-5-(diphosphooxymethyl)pyrimidine. 2-[(2R,5Z)-2-carboxy-4-methylthiazol-5(2H)-ylidene]ethyl phosphate-binding positions include glycine 175 and 195–196; that span reads IS.

It belongs to the thiamine-phosphate synthase family. The cofactor is Mg(2+).

It catalyses the reaction 2-[(2R,5Z)-2-carboxy-4-methylthiazol-5(2H)-ylidene]ethyl phosphate + 4-amino-2-methyl-5-(diphosphooxymethyl)pyrimidine + 2 H(+) = thiamine phosphate + CO2 + diphosphate. The catalysed reaction is 2-(2-carboxy-4-methylthiazol-5-yl)ethyl phosphate + 4-amino-2-methyl-5-(diphosphooxymethyl)pyrimidine + 2 H(+) = thiamine phosphate + CO2 + diphosphate. It carries out the reaction 4-methyl-5-(2-phosphooxyethyl)-thiazole + 4-amino-2-methyl-5-(diphosphooxymethyl)pyrimidine + H(+) = thiamine phosphate + diphosphate. It participates in cofactor biosynthesis; thiamine diphosphate biosynthesis; thiamine phosphate from 4-amino-2-methyl-5-diphosphomethylpyrimidine and 4-methyl-5-(2-phosphoethyl)-thiazole: step 1/1. In terms of biological role, condenses 4-methyl-5-(beta-hydroxyethyl)thiazole monophosphate (THZ-P) and 2-methyl-4-amino-5-hydroxymethyl pyrimidine pyrophosphate (HMP-PP) to form thiamine monophosphate (TMP). The protein is Thiamine-phosphate synthase of Bacillus cereus (strain ZK / E33L).